We begin with the raw amino-acid sequence, 130 residues long: Putative transposase for insertion sequence element IS6501 (130 aa).

Belongs to the transposase 11 family.

In terms of biological role, involved in the transposition of the insertion sequence. The sequence is that of Putative transposase for insertion sequence element IS6501 from Brucella ovis (strain ATCC 25840 / 63/290 / NCTC 10512).